The sequence spans 359 residues: Fructose-bisphosphate aldolase, cytoplasmic isozyme 2 (359 aa).

The substrate site is built by arginine 52 and lysine 143. Catalysis depends on glutamate 184, which acts as the Proton acceptor. The Schiff-base intermediate with dihydroxyacetone-P role is filled by lysine 226.

This sequence belongs to the class I fructose-bisphosphate aldolase family.

The protein localises to the cytoplasm. The catalysed reaction is beta-D-fructose 1,6-bisphosphate = D-glyceraldehyde 3-phosphate + dihydroxyacetone phosphate. The protein operates within carbohydrate degradation; glycolysis; D-glyceraldehyde 3-phosphate and glycerone phosphate from D-glucose: step 4/4. In Pisum sativum (Garden pea), this protein is Fructose-bisphosphate aldolase, cytoplasmic isozyme 2.